The chain runs to 95 residues: L-amino-acid oxidase (95 aa).

This sequence belongs to the flavin monoamine oxidase family. FIG1 subfamily. In terms of assembly, homodimer; non-covalently linked. The cofactor is FAD. In terms of processing, N-glycosylated. In terms of tissue distribution, expressed by the venom gland.

The protein resides in the secreted. It carries out the reaction an L-alpha-amino acid + O2 + H2O = a 2-oxocarboxylate + H2O2 + NH4(+). It catalyses the reaction L-leucine + O2 + H2O = 4-methyl-2-oxopentanoate + H2O2 + NH4(+). The enzyme catalyses L-phenylalanine + O2 + H2O = 3-phenylpyruvate + H2O2 + NH4(+). The catalysed reaction is L-tryptophan + O2 + H2O = indole-3-pyruvate + H2O2 + NH4(+). It carries out the reaction L-methionine + O2 + H2O = 4-methylsulfanyl-2-oxobutanoate + H2O2 + NH4(+). It catalyses the reaction L-arginine + O2 + H2O = 5-guanidino-2-oxopentanoate + H2O2 + NH4(+). Catalyzes an oxidative deamination of predominantly hydrophobic and aromatic L-amino acids, thus producing hydrogen peroxide that may contribute to the diverse toxic effects of this enzyme. Is highly active on L-Met, L-Leu, L-Phe, L-Trp, and L-Arg, and no weakly or no active on L-His, L-Tyr, L-Ile, L-Gln, and L-Lys. Exhibits diverse biological activities, such as antibacterial activity against both Gram-positive (B.subtilis) and Gram-negative (E.coli) bacteria, and inhibition of ADP- or collagen-induced platelet aggregation. Effects of snake L-amino oxidases on platelets are controversial, since they either induce aggregation or inhibit agonist-induced aggregation. These different effects are probably due to different experimental conditions. This protein may also induce hemorrhage, hemolysis, edema, apoptosis, and have antiparasitic activities. The chain is L-amino-acid oxidase from Naja oxiana (Central Asian cobra).